Consider the following 143-residue polypeptide: Periplasmic nitrate reductase, electron transfer subunit (143 aa).

Positions 1–22 are cleaved as a signal peptide; sequence MKKILTLAAIVLAIGGCSGQQA. Residues histidine 72, cysteine 85, cysteine 88, histidine 89, histidine 106, cysteine 121, cysteine 124, and histidine 125 each coordinate heme c.

Belongs to the NapB family. In terms of assembly, component of the periplasmic nitrate reductase NapAB complex composed of NapA and NapB. Binds 2 heme C groups per subunit.

It localises to the periplasm. Its function is as follows. Electron transfer subunit of the periplasmic nitrate reductase complex NapAB. Receives electrons from the membrane-anchored tetraheme c-type CymA protein and transfers these to NapA subunit, thus allowing electron flow between membrane and periplasm. Not essential for nitrate reduction but confers advantage to the organism when grown on nitrate and thereby a fitness gain in utilizing nitrate. The polypeptide is Periplasmic nitrate reductase, electron transfer subunit (Shewanella oneidensis (strain ATCC 700550 / JCM 31522 / CIP 106686 / LMG 19005 / NCIMB 14063 / MR-1)).